The sequence spans 58 residues: uncharacterized protein (58 aa).

A helical membrane pass occupies residues 12 to 32 (VALVYISVYFFSCISLIVYFF).

It is found in the membrane. This is an uncharacterized protein from Saccharomyces cerevisiae (strain ATCC 204508 / S288c) (Baker's yeast).